The sequence spans 59 residues: Large ribosomal subunit protein uL30 (59 aa).

The protein belongs to the universal ribosomal protein uL30 family. As to quaternary structure, part of the 50S ribosomal subunit.

This chain is Large ribosomal subunit protein uL30, found in Pelotomaculum thermopropionicum (strain DSM 13744 / JCM 10971 / SI).